A 288-amino-acid polypeptide reads, in one-letter code: Executioner caspase (288 aa).

Residue cysteine 131 is part of the active site.

This sequence belongs to the peptidase C14A family.

Its function is as follows. May induce host cell apoptosis and contribute of the establishment of a special cell cleavage process in which apoppotic bodies are rescued by the virus and differentiate to form large vesicles in which virion assembles. In Spodoptera frugiperda ascovirus 1a (SfAV-1a), this protein is Executioner caspase.